The primary structure comprises 772 residues: uncharacterized protein (772 aa).

Helical transmembrane passes span 16 to 36 and 301 to 321; these read LITF…LFSY and IGWI…LFSW. The HTH araC/xylS-type domain occupies 670–768; it reads DNIIHIIHHE…GITPGNYRQQ (99 aa). 2 DNA-binding regions (H-T-H motif) span residues 687 to 708 and 735 to 758; these read DEIA…KKEM and VKDI…KKLE.

It localises to the cell membrane. This is an uncharacterized protein from Bacillus subtilis (strain 168).